Here is a 258-residue protein sequence, read N- to C-terminus: MTRRRQIYEGKAKILYEGPEPGTLIQYFKDDATAFNAQKKGTINGKGVLNNRISEHIFTMLGTIGVATHFIRRLNMREQLIRQVEIVPIEVVVRNVAAGSLTKRLGIEEGTQLPRTIIEYYYKDDALGDPMVADEHIACFGWASQEEMHDIADMAIRVNDFMCGLFAGIGIRLVDFKLEFGRFWDNDYSRVILADEISPDGCRLWDMATGEKLDKDRFRQDLGGEVEAYQEIARRLGLMPDGENMILDLESHRKNRGK.

Belongs to the SAICAR synthetase family.

It carries out the reaction 5-amino-1-(5-phospho-D-ribosyl)imidazole-4-carboxylate + L-aspartate + ATP = (2S)-2-[5-amino-1-(5-phospho-beta-D-ribosyl)imidazole-4-carboxamido]succinate + ADP + phosphate + 2 H(+). Its pathway is purine metabolism; IMP biosynthesis via de novo pathway; 5-amino-1-(5-phospho-D-ribosyl)imidazole-4-carboxamide from 5-amino-1-(5-phospho-D-ribosyl)imidazole-4-carboxylate: step 1/2. This Rhizorhabdus wittichii (strain DSM 6014 / CCUG 31198 / JCM 15750 / NBRC 105917 / EY 4224 / RW1) (Sphingomonas wittichii) protein is Phosphoribosylaminoimidazole-succinocarboxamide synthase.